Here is a 519-residue protein sequence, read N- to C-terminus: Probable DNA ligase (519 aa).

Glu-221 contributes to the ATP binding site. The active-site N6-AMP-lysine intermediate is Lys-223. Arg-228, Arg-243, Glu-272, Phe-312, Arg-384, and Lys-390 together coordinate ATP.

This sequence belongs to the ATP-dependent DNA ligase family. It depends on Mg(2+) as a cofactor.

The catalysed reaction is ATP + (deoxyribonucleotide)n-3'-hydroxyl + 5'-phospho-(deoxyribonucleotide)m = (deoxyribonucleotide)n+m + AMP + diphosphate.. Its function is as follows. DNA ligase that seals nicks in double-stranded DNA during DNA replication, DNA recombination and DNA repair. The chain is Probable DNA ligase from Mycolicibacterium paratuberculosis (strain ATCC BAA-968 / K-10) (Mycobacterium paratuberculosis).